The sequence spans 268 residues: Embryonic abundant protein USP87 (268 aa).

A signal peptide spans 1 to 22 (MEFAHLTVLSLFCLAFVGITAT). Repeat copies occupy residues 50-55 (GKTNSL), 83-88 (GNTNSV), 101-106 (GVTDSI), 166-183 (YVVE…MCHR), and 202-222 (YVVS…VCHH). The segment at 50-106 (GKTNSLPIKSEELKQYSTLFFEHDLHPRKNFILGNTNSVGSIIRPFTKSRQGVTDSI) is 3 X 6 AA approximate repeats. The region spanning 68-259 (LFFEHDLHPR…GNKAAAWVPN (192 aa)) is the BURP domain. A 2 X approximate repeats region spans residues 166–222 (YVVEDVKKVGDNAVMCHRLNFEKVVFNCHQVRDTTAYVVSLVASDGTKTKALTVCHH). N-linked (GlcNAc...) asparagine glycosylation is present at N259.

Seed.

The chain is Embryonic abundant protein USP87 from Vicia faba (Broad bean).